Here is an 875-residue protein sequence, read N- to C-terminus: Phosphatidylinositol 3-kinase VPS34 (875 aa).

Positions Leu14–Leu188 constitute a C2 PI3K-type domain. A PIK helical domain is found at Leu293 to Lys526. In terms of domain architecture, PI3K/PI4K catalytic spans Cys593–Leu859. The tract at residues Val599–Ser605 is G-loop. Residues Gly728–Asn736 are catalytic loop. The segment at His747–Pro768 is activation loop.

This sequence belongs to the PI3/PI4-kinase family. As to quaternary structure, component of the autophagy-specific VPS34 PI3-kinase complex I composed of VPS15, VPS30, VPS34, ATG14 and ATG38, and of the VPS34 PI3-kinase complex II composed of VPS15, VPS30, VPS34 and VPS38. Interacts directly with ATG38. Interacts directly with VPS34. Autophosphorylated. Might also be phosphorylated by VPS15.

The protein resides in the golgi apparatus. It localises to the trans-Golgi network membrane. The protein localises to the endosome membrane. The enzyme catalyses a 1,2-diacyl-sn-glycero-3-phospho-(1D-myo-inositol) + ATP = a 1,2-diacyl-sn-glycero-3-phospho-(1D-myo-inositol-3-phosphate) + ADP + H(+). Phosphatidylinositol 3-kinase activity is directly dependent on VPS15 protein kinase activity. Functionally, phosphatidylinositol 3-kinase required for cytoplasm to vacuole transport (Cvt) and autophagy as a part of the autophagy-specific VPS34 PI3-kinase complex I. This complex is essential to recruit the ATG8-phosphatidylinositol conjugate and the ATG12-ATG5 conjugate to the pre-autophagosomal structure. Also involved in endosome-to-Golgi retrograde transport as part of the VPS34 PI3-kinase complex II. This second complex is required for the endosome-to-Golgi retrieval of PEP1 and KEX2, and the recruitment of VPS5 and VPS7, two components of the retromer complex, to endosomal membranes (probably through the synthesis of a specific pool of phosphatidylinositol 3-phosphate recruiting the retromer to the endosomes). Its activation by VPS15 may lead to the phosphorylation of phosphatidylinositol in the sorting compartment membrane. Finally, it might also be involved in ethanol tolerance and cell wall integrity. This Saccharomyces cerevisiae (strain ATCC 204508 / S288c) (Baker's yeast) protein is Phosphatidylinositol 3-kinase VPS34 (VPS34).